The primary structure comprises 97 residues: Essential MCU regulator, mitochondrial (97 aa).

Residues 1-35 constitute a mitochondrion transit peptide; the sequence is MIVPRLALPISLALQRVSRRVAEHPHNLRILQRHM. A helical transmembrane segment spans residues 53-73; the sequence is PFGLLAIFCAVIPGLFVGATI.

The protein belongs to the SMDT1/EMRE family.

The protein resides in the mitochondrion inner membrane. Essential regulatory subunit of the mitochondrial calcium uniporter MCU channel, a protein that mediates calcium uptake into mitochondria. This is Essential MCU regulator, mitochondrial from Drosophila melanogaster (Fruit fly).